The sequence spans 705 residues: Polyribonucleotide nucleotidyltransferase (705 aa).

Residues Asp-485 and Asp-491 each coordinate Mg(2+). Positions 552-611 constitute a KH domain; the sequence is PRVYTMTIAPEKIRDVIGAGGKTINKIIGETGVQIDIKEDGKIYVMSSDSVGANRALKMI. Residues 621–689 form the S1 motif domain; sequence GEIYLGKVTR…DQGRINLSRR (69 aa).

This sequence belongs to the polyribonucleotide nucleotidyltransferase family. Requires Mg(2+) as cofactor.

Its subcellular location is the cytoplasm. The catalysed reaction is RNA(n+1) + phosphate = RNA(n) + a ribonucleoside 5'-diphosphate. Its function is as follows. Involved in mRNA degradation. Catalyzes the phosphorolysis of single-stranded polyribonucleotides processively in the 3'- to 5'-direction. This Clostridium tetani (strain Massachusetts / E88) protein is Polyribonucleotide nucleotidyltransferase.